A 256-amino-acid chain; its full sequence is Histone H1 (256 aa).

Low complexity-rich tracts occupy residues 1 to 19 (MSDS…PPAT) and 27 to 43 (KKAS…ASAT). Disordered stretches follow at residues 1 to 53 (MSDS…QQMV) and 108 to 256 (GKGA…AAKK). At Ser-11 the chain carries Phosphoserine. One can recognise an H15 domain in the interval 45–119 (SHPPTQQMVD…GASGSFKLSA (75 aa)). Composition is skewed to basic and acidic residues over residues 121 to 140 (AKKE…EKKV) and 176 to 193 (KTAE…DAKK). Over residues 194 to 229 (TGIIKSKPAATKAKVTAAKPKAVVAKASKAKPAVSA) the composition is skewed to low complexity. Residues 245-256 (KKPKAKTTAAKK) are compositionally biased toward basic residues.

This sequence belongs to the histone H1/H5 family. Phosphorylated in oocytes during prophase I of meiosis.

The protein resides in the nucleus. It localises to the chromosome. Its function is as follows. Histones H1 are necessary for the condensation of nucleosome chains into higher-order structures. The chain is Histone H1 (His1) from Drosophila melanogaster (Fruit fly).